The chain runs to 427 residues: Histidinol dehydrogenase (427 aa).

3 residues coordinate NAD(+): Y127, Q185, and N208. Residues S232, Q254, and H257 each coordinate substrate. Zn(2+)-binding residues include Q254 and H257. Catalysis depends on proton acceptor residues E321 and H322. Substrate contacts are provided by H322, D355, E409, and H414. D355 is a Zn(2+) binding site. H414 provides a ligand contact to Zn(2+).

Belongs to the histidinol dehydrogenase family. Requires Zn(2+) as cofactor.

The catalysed reaction is L-histidinol + 2 NAD(+) + H2O = L-histidine + 2 NADH + 3 H(+). Its pathway is amino-acid biosynthesis; L-histidine biosynthesis; L-histidine from 5-phospho-alpha-D-ribose 1-diphosphate: step 9/9. Its function is as follows. Catalyzes the sequential NAD-dependent oxidations of L-histidinol to L-histidinaldehyde and then to L-histidine. The sequence is that of Histidinol dehydrogenase from Haemophilus influenzae (strain 86-028NP).